A 553-amino-acid polypeptide reads, in one-letter code: Zinc finger CCHC domain-containing protein 8 homolog (553 aa).

At serine 59 the chain carries Phosphoserine. A CCHC-type zinc finger spans residues 183–200 (SSCFNCGDTEHSLRDCTK). Residues serine 292 and serine 347 each carry the phosphoserine modification. Tyrosine 356 bears the Phosphotyrosine mark. A disordered region spans residues 388–492 (LEEETEDPPL…APSTPFKASY (105 aa)). Over residues 395–409 (PPLPPSVPPPQPPPP) the composition is skewed to pro residues. Residues serine 421 and serine 423 each carry the phosphoserine modification. 2 stretches are compositionally biased toward polar residues: residues 444-456 (ASHN…SKSP) and 473-485 (ESGN…SAPS).

It belongs to the ZCCHC8 family.

It localises to the nucleus. Its subcellular location is the nucleoplasm. Functionally, scaffolding subunit of the trimeric nuclear exosome targeting (NEXT) complex, a complex that directs a subset of non-coding short-lived RNAs for exosomal degradation. The RNA exosome is fundamental for the degradation of RNA in eukaryotic nuclei. May be involved in pre-mRNA splicing. The chain is Zinc finger CCHC domain-containing protein 8 homolog from Drosophila melanogaster (Fruit fly).